Consider the following 504-residue polypeptide: Beta-xylosidase (504 aa).

The active-site Proton donor is E160. E280 functions as the Nucleophile in the catalytic mechanism.

The protein belongs to the glycosyl hydrolase 39 family.

The catalysed reaction is Hydrolysis of (1-&gt;4)-beta-D-xylans, to remove successive D-xylose residues from the non-reducing termini.. The polypeptide is Beta-xylosidase (xynB) (Geobacillus stearothermophilus (Bacillus stearothermophilus)).